Consider the following 1894-residue polypeptide: Plexin-A2 (1894 aa).

The N-terminal stretch at 1–34 (MEQRRPWPRALEVDSRSVVLLSVVWVLLAPPAAG) is a signal peptide. Residues 35 to 508 (MPQFSTFHSE…SERQVTRVPV (474 aa)) form the Sema domain. At 35–1237 (MPQFSTFHSE…VISDSLLTLP (1203 aa)) the chain is on the extracellular side. Residues N76 and N91 are each glycosylated (N-linked (GlcNAc...) asparagine). Disulfide bonds link C94–C103, C129–C137, C284–C405, C300–C356, C374–C393, C511–C528, C517–C559, C520–C537, C531–C543, and C594–C613. An N-linked (GlcNAc...) asparagine glycan is attached at N327. 3 N-linked (GlcNAc...) asparagine glycosylation sites follow: N598, N696, and N756. IPT/TIG domains are found at residues 858–951 (PQIT…QYTF), 954–1037 (PSVL…QFEY), 1041–1139 (PRVQ…KFIY), and 1143–1228 (PTFE…SVSV). The N-linked (GlcNAc...) asparagine glycan is linked to N1205. A helical transmembrane segment spans residues 1238-1258 (AIVSIAAGGSLLLIIVIIVLI). The Cytoplasmic portion of the chain corresponds to 1259–1894 (AYKRKSREND…QLINAMSIES (636 aa)). A coiled-coil region spans residues 1261-1310 (KRKSRENDLTLKRLQMQMDNLESRVALECKEAFAELQTDINELTSDLDRS). Phosphoserine is present on S1612.

This sequence belongs to the plexin family. As to quaternary structure, homodimer. The PLXNA2 homodimer interacts with a SEMA6A homodimer, giving rise to a heterotetramer. Interacts directly with NRP1 and NRP2. Interacts with RND1. In terms of tissue distribution, detected in fetal brain.

The protein resides in the cell membrane. Its function is as follows. Coreceptor for SEMA3A and SEMA6A. Necessary for signaling by SEMA6A and class 3 semaphorins and subsequent remodeling of the cytoskeleton. Plays a role in axon guidance, invasive growth and cell migration. Class 3 semaphorins bind to a complex composed of a neuropilin and a plexin. The plexin modulates the affinity of the complex for specific semaphorins, and its cytoplasmic domain is required for the activation of down-stream signaling events in the cytoplasm. The sequence is that of Plexin-A2 (PLXNA2) from Homo sapiens (Human).